Here is a 179-residue protein sequence, read N- to C-terminus: Large ribosomal subunit protein uL5 (179 aa).

It belongs to the universal ribosomal protein uL5 family. In terms of assembly, part of the 50S ribosomal subunit; part of the 5S rRNA/L5/L18/L25 subcomplex. Contacts the 5S rRNA and the P site tRNA. Forms a bridge to the 30S subunit in the 70S ribosome.

Functionally, this is one of the proteins that bind and probably mediate the attachment of the 5S RNA into the large ribosomal subunit, where it forms part of the central protuberance. In the 70S ribosome it contacts protein S13 of the 30S subunit (bridge B1b), connecting the 2 subunits; this bridge is implicated in subunit movement. Contacts the P site tRNA; the 5S rRNA and some of its associated proteins might help stabilize positioning of ribosome-bound tRNAs. The protein is Large ribosomal subunit protein uL5 of Shewanella sp. (strain MR-4).